Consider the following 464-residue polypeptide: ATP-dependent protease ATPase subunit HslU (464 aa).

ATP-binding positions include Ile-22, 64–69, Asp-275, Glu-340, and Arg-412; that span reads GVGKTE.

It belongs to the ClpX chaperone family. HslU subfamily. As to quaternary structure, a double ring-shaped homohexamer of HslV is capped on each side by a ring-shaped HslU homohexamer. The assembly of the HslU/HslV complex is dependent on binding of ATP.

The protein localises to the cytoplasm. Its function is as follows. ATPase subunit of a proteasome-like degradation complex; this subunit has chaperone activity. The binding of ATP and its subsequent hydrolysis by HslU are essential for unfolding of protein substrates subsequently hydrolyzed by HslV. HslU recognizes the N-terminal part of its protein substrates and unfolds these before they are guided to HslV for hydrolysis. The sequence is that of ATP-dependent protease ATPase subunit HslU from Cytophaga hutchinsonii (strain ATCC 33406 / DSM 1761 / CIP 103989 / NBRC 15051 / NCIMB 9469 / D465).